Here is a 346-residue protein sequence, read N- to C-terminus: Holliday junction branch migration complex subunit RuvB (346 aa).

The large ATPase domain (RuvB-L) stretch occupies residues threonine 2 to tyrosine 183. Residues isoleucine 22, arginine 23, glycine 64, lysine 67, threonine 68, threonine 69, glutamate 130–phenylalanine 132, arginine 173, tyrosine 183, and arginine 220 each bind ATP. Threonine 68 contacts Mg(2+). Residues serine 184 to lysine 254 are small ATPAse domain (RuvB-S). Residues proline 257–glycine 346 form a head domain (RuvB-H) region. Residues arginine 293, arginine 312, and arginine 317 each coordinate DNA.

Belongs to the RuvB family. Homohexamer. Forms an RuvA(8)-RuvB(12)-Holliday junction (HJ) complex. HJ DNA is sandwiched between 2 RuvA tetramers; dsDNA enters through RuvA and exits via RuvB. An RuvB hexamer assembles on each DNA strand where it exits the tetramer. Each RuvB hexamer is contacted by two RuvA subunits (via domain III) on 2 adjacent RuvB subunits; this complex drives branch migration. In the full resolvosome a probable DNA-RuvA(4)-RuvB(12)-RuvC(2) complex forms which resolves the HJ.

It localises to the cytoplasm. It catalyses the reaction ATP + H2O = ADP + phosphate + H(+). The RuvA-RuvB-RuvC complex processes Holliday junction (HJ) DNA during genetic recombination and DNA repair, while the RuvA-RuvB complex plays an important role in the rescue of blocked DNA replication forks via replication fork reversal (RFR). RuvA specifically binds to HJ cruciform DNA, conferring on it an open structure. The RuvB hexamer acts as an ATP-dependent pump, pulling dsDNA into and through the RuvAB complex. RuvB forms 2 homohexamers on either side of HJ DNA bound by 1 or 2 RuvA tetramers; 4 subunits per hexamer contact DNA at a time. Coordinated motions by a converter formed by DNA-disengaged RuvB subunits stimulates ATP hydrolysis and nucleotide exchange. Immobilization of the converter enables RuvB to convert the ATP-contained energy into a lever motion, pulling 2 nucleotides of DNA out of the RuvA tetramer per ATP hydrolyzed, thus driving DNA branch migration. The RuvB motors rotate together with the DNA substrate, which together with the progressing nucleotide cycle form the mechanistic basis for DNA recombination by continuous HJ branch migration. Branch migration allows RuvC to scan DNA until it finds its consensus sequence, where it cleaves and resolves cruciform DNA. In Stenotrophomonas maltophilia (strain K279a), this protein is Holliday junction branch migration complex subunit RuvB.